The chain runs to 658 residues: Glycogen debranching enzyme (658 aa).

The Nucleophile role is filled by Asp336. The Proton donor role is filled by Glu371. Residues 459–484 (EANGEENRDGTNSNYSDNHGKEGLGG) form a disordered region.

It belongs to the glycosyl hydrolase 13 family.

The catalysed reaction is Hydrolysis of (1-&gt;6)-alpha-D-glucosidic linkages to branches with degrees of polymerization of three or four glucose residues in limit dextrin.. The protein operates within glycan degradation; glycogen degradation. Removes maltotriose and maltotetraose chains that are attached by 1,6-alpha-linkage to the limit dextrin main chain, generating a debranched limit dextrin. The protein is Glycogen debranching enzyme of Salmonella enteritidis PT4 (strain P125109).